Consider the following 131-residue polypeptide: 1,4-dihydroxy-2-naphthoyl-CoA hydrolase (131 aa).

Residue Asp7 is part of the active site.

Belongs to the 4-hydroxybenzoyl-CoA thioesterase family. DHNA-CoA hydrolase subfamily.

It catalyses the reaction 1,4-dihydroxy-2-naphthoyl-CoA + H2O = 1,4-dihydroxy-2-naphthoate + CoA + H(+). It functions in the pathway cofactor biosynthesis; phylloquinone biosynthesis. Its pathway is quinol/quinone metabolism; 1,4-dihydroxy-2-naphthoate biosynthesis; 1,4-dihydroxy-2-naphthoate from chorismate: step 7/7. Catalyzes the hydrolysis of 1,4-dihydroxy-2-naphthoyl-CoA (DHNA-CoA) to 1,4-dihydroxy-2-naphthoate (DHNA), a reaction involved in phylloquinone (vitamin K1) biosynthesis. The chain is 1,4-dihydroxy-2-naphthoyl-CoA hydrolase from Synechococcus sp. (strain RCC307).